Reading from the N-terminus, the 367-residue chain is Putative 12-oxophytodienoate reductase 11 (367 aa).

FMN contacts are provided by residues Pro-26–Thr-28, Ala-59, and Gln-101. His-178–His-181 lines the substrate pocket. Residue Tyr-183 is the Proton donor of the active site. Arg-230 provides a ligand contact to FMN. Arg-270 is a binding site for substrate. Residues Gly-300 and Gly-321–Arg-322 each bind FMN.

This sequence belongs to the NADH:flavin oxidoreductase/NADH oxidase family. FMN is required as a cofactor.

Its function is as follows. Putative oxophytodienoate reductase that may be involved in the biosynthesis or metabolism of oxylipin signaling molecules. The protein is Putative 12-oxophytodienoate reductase 11 (OPR11) of Oryza sativa subsp. japonica (Rice).